The sequence spans 373 residues: uncharacterized protein (373 aa).

The region spanning 15-101 (DFTYLGCYSS…SDSYSVYVDE (87 aa)) is the WSC domain. 3 disordered regions span residues 101 to 171 (ESEE…SSLS), 183 to 210 (FSFS…ITTS), and 291 to 316 (NLSE…RGAA). Low complexity-rich tracts occupy residues 110–171 (SSAQ…SSLS) and 183–204 (FSFS…SSES).

This is an uncharacterized protein from Pichia angusta (Yeast).